The chain runs to 909 residues: Translation initiation factor IF-2 (909 aa).

Positions 49–314 (LNREQGGSAG…GKQRKTSTLQ (266 aa)) are disordered. Composition is skewed to basic and acidic residues over residues 99–177 (DAVE…EHKQ), 186–236 (IQSE…KWSS), and 255–270 (RAAEDENDAKVEGDRR). The segment covering 271–285 (ARGRSGKATRQKKNN) has biased composition (basic residues). Residues 286–299 (KHSESKADREEARA) are compositionally biased toward basic and acidic residues. A tr-type G domain is found at 408 to 577 (PRAPVVTIMG…LLQAEVLELK (170 aa)). The interval 417–424 (GHVDHGKT) is G1. 417 to 424 (GHVDHGKT) contributes to the GTP binding site. A G2 region spans residues 442–446 (GITQH). The segment at 463–466 (DTPG) is G3. GTP-binding positions include 463–467 (DTPGH) and 517–520 (NKID). The segment at 517-520 (NKID) is G4. A G5 region spans residues 553-555 (SAK).

This sequence belongs to the TRAFAC class translation factor GTPase superfamily. Classic translation factor GTPase family. IF-2 subfamily.

The protein resides in the cytoplasm. In terms of biological role, one of the essential components for the initiation of protein synthesis. Protects formylmethionyl-tRNA from spontaneous hydrolysis and promotes its binding to the 30S ribosomal subunits. Also involved in the hydrolysis of GTP during the formation of the 70S ribosomal complex. This chain is Translation initiation factor IF-2, found in Photorhabdus laumondii subsp. laumondii (strain DSM 15139 / CIP 105565 / TT01) (Photorhabdus luminescens subsp. laumondii).